The following is a 229-amino-acid chain: Large ribosomal subunit protein uL1 (229 aa).

The protein belongs to the universal ribosomal protein uL1 family. As to quaternary structure, part of the 50S ribosomal subunit.

In terms of biological role, binds directly to 23S rRNA. The L1 stalk is quite mobile in the ribosome, and is involved in E site tRNA release. Its function is as follows. Protein L1 is also a translational repressor protein, it controls the translation of the L11 operon by binding to its mRNA. The protein is Large ribosomal subunit protein uL1 of Rhodopseudomonas palustris (strain BisB5).